A 273-amino-acid polypeptide reads, in one-letter code: MAIVKCKPTSPGRRHVVKVVNLELHKGKPFAPLVEKNSKSGGRNNNGRITTRHIGGGHKQAYRIVDFKRNKDGIPATVERLEYDPNRSANIALVLYKDGERRYILAPKGLKAGDQIQSGVDAAIKAGNTLPMRNIPVGSTVHNVEMKPGKGGQIARSAGTYVQIVAREGSYVTLRLRSGEMRKVESDCRATLGEVGNAEHMLRVLGKAGAARWRGVRPTVRGTAMNPVDHPHGGGEGRNFGKHPVSPWGLQTKGKKTRSNKRTDKFIVRRRSK.

Disordered regions lie at residues 32-53 (PLVE…TTRH) and 221-273 (RGTA…RRSK). The span at 39-48 (KSGGRNNNGR) shows a compositional bias: low complexity.

It belongs to the universal ribosomal protein uL2 family. In terms of assembly, part of the 50S ribosomal subunit. Forms a bridge to the 30S subunit in the 70S ribosome.

One of the primary rRNA binding proteins. Required for association of the 30S and 50S subunits to form the 70S ribosome, for tRNA binding and peptide bond formation. It has been suggested to have peptidyltransferase activity; this is somewhat controversial. Makes several contacts with the 16S rRNA in the 70S ribosome. This Erwinia tasmaniensis (strain DSM 17950 / CFBP 7177 / CIP 109463 / NCPPB 4357 / Et1/99) protein is Large ribosomal subunit protein uL2.